The following is a 208-amino-acid chain: Ribosomal RNA large subunit methyltransferase E (208 aa).

5 residues coordinate S-adenosyl-L-methionine: Gly-62, Trp-64, Asp-82, Asp-98, and Asp-123. Lys-163 (proton acceptor) is an active-site residue.

It belongs to the class I-like SAM-binding methyltransferase superfamily. RNA methyltransferase RlmE family.

Its subcellular location is the cytoplasm. It catalyses the reaction uridine(2552) in 23S rRNA + S-adenosyl-L-methionine = 2'-O-methyluridine(2552) in 23S rRNA + S-adenosyl-L-homocysteine + H(+). In terms of biological role, specifically methylates the uridine in position 2552 of 23S rRNA at the 2'-O position of the ribose in the fully assembled 50S ribosomal subunit. The sequence is that of Ribosomal RNA large subunit methyltransferase E from Actinobacillus pleuropneumoniae serotype 5b (strain L20).